The sequence spans 142 residues: Large ribosomal subunit protein uL11 (142 aa).

Belongs to the universal ribosomal protein uL11 family. In terms of assembly, part of the ribosomal stalk of the 50S ribosomal subunit. Interacts with L10 and the large rRNA to form the base of the stalk. L10 forms an elongated spine to which L12 dimers bind in a sequential fashion forming a multimeric L10(L12)X complex. Post-translationally, one or more lysine residues are methylated.

Functionally, forms part of the ribosomal stalk which helps the ribosome interact with GTP-bound translation factors. The chain is Large ribosomal subunit protein uL11 from Buchnera aphidicola subsp. Schizaphis graminum (strain Sg).